The chain runs to 303 residues: 2-(5''-triphosphoribosyl)-3'-dephosphocoenzyme-A synthase (303 aa).

Belongs to the CitG/MdcB family.

The enzyme catalyses 3'-dephospho-CoA + ATP = 2'-(5''-triphospho-alpha-D-ribosyl)-3'-dephospho-CoA + adenine. In terms of biological role, catalyzes the formation of 2-(5''-triphosphoribosyl)-3'-dephosphocoenzyme-A, the precursor of the prosthetic group of the holo-acyl carrier protein (gamma chain) of citrate lyase, from ATP and dephospho-CoA. In Escherichia fergusonii (strain ATCC 35469 / DSM 13698 / CCUG 18766 / IAM 14443 / JCM 21226 / LMG 7866 / NBRC 102419 / NCTC 12128 / CDC 0568-73), this protein is 2-(5''-triphosphoribosyl)-3'-dephosphocoenzyme-A synthase.